A 366-amino-acid chain; its full sequence is 3-dehydroquinate synthase (366 aa).

Residues 75–80 (DGEEYK), 109–113 (GVVGD), 133–134 (TT), Lys-146, Lys-155, and 173–176 (TLDT) contribute to the NAD(+) site. Zn(2+)-binding residues include Glu-188, His-251, and His-268.

Belongs to the sugar phosphate cyclases superfamily. Dehydroquinate synthase family. Co(2+) is required as a cofactor. Zn(2+) serves as cofactor. It depends on NAD(+) as a cofactor.

It is found in the cytoplasm. It carries out the reaction 7-phospho-2-dehydro-3-deoxy-D-arabino-heptonate = 3-dehydroquinate + phosphate. It functions in the pathway metabolic intermediate biosynthesis; chorismate biosynthesis; chorismate from D-erythrose 4-phosphate and phosphoenolpyruvate: step 2/7. In terms of biological role, catalyzes the conversion of 3-deoxy-D-arabino-heptulosonate 7-phosphate (DAHP) to dehydroquinate (DHQ). The protein is 3-dehydroquinate synthase of Nitrosospira multiformis (strain ATCC 25196 / NCIMB 11849 / C 71).